The primary structure comprises 1551 residues: Dual oxidase 1 (1551 aa).

An N-terminal signal peptide occupies residues 1–21; that stretch reads MGFCLALAWTLLVGAWTPLGA. The Extracellular portion of the chain corresponds to 22–596; that stretch reads QNPISWEVQR…YFEGSGFGFG (575 aa). The segment at 26 to 593 is peroxidase-like; mediates peroxidase activity; that stretch reads SWEVQRFDGW…VRDYFEGSGF (568 aa). A glycan (N-linked (GlcNAc...) asparagine) is linked at N94. The interval 150 to 172 is disordered; it reads RWDPETGRSPSNPRDPANQVTGW. Residues N342, N354, N461, and N534 are each glycosylated (N-linked (GlcNAc...) asparagine). Residues 597–617 traverse the membrane as a helical segment; the sequence is VTIGTLCCFPLVSLLSAWIVA. Residues 618–1044 are Cytoplasmic-facing; it reads RLRMRNFKRL…KRFIENYRRH (427 aa). 3 consecutive EF-hand domains span residues 815–850, 851–886, and 895–930; these read PQDM…FMKG, SPEE…FIEI, and QLAE…HNSE. 9 residues coordinate Ca(2+): D828, D830, N832, Y834, E839, D864, D866, N868, and E875. The interaction with TXNDC11 stretch occupies residues 956 to 1248; the sequence is YISQDMICPS…GSFALIQLPR (293 aa). Residues 1045–1065 form a helical membrane-spanning segment; the sequence is IGCVAVFYAIAGGLFLERAYY. The Extracellular segment spans residues 1066 to 1080; the sequence is YAFAAHHTGITDTTR. The chain crosses the membrane as a helical span at residues 1081–1101; that stretch reads VGIILSRGTAASISFMFSYIL. Positions 1087 to 1269 constitute a Ferric oxidoreductase domain; it reads RGTAASISFM…YGGDKLVSLS (183 aa). Residues 1102-1148 lie on the Cytoplasmic side of the membrane; that stretch reads LTMCRNLITFLRETFLNRYVPFDAAVDFHRLIASTAIVLTVLHSVGH. Residues 1149 to 1171 traverse the membrane as a helical segment; sequence VVNVYLFSISPLSVLSCLFPGLF. Topologically, residues 1172-1188 are extracellular; that stretch reads HDDGSELPQKYYWWFFQ. A helical transmembrane segment spans residues 1189 to 1209; it reads TVPGLTGVVLLLILAIMYVFA. The Cytoplasmic portion of the chain corresponds to 1210–1226; it reads SHHFRRRSFRGFWLTHH. A helical transmembrane segment spans residues 1227 to 1247; sequence LYILLYVLLIIHGSFALIQLP. A topological domain (extracellular) is located at residue R1248. A helical transmembrane segment spans residues 1249 to 1269; that stretch reads FHIFFLVPAIIYGGDKLVSLS. The region spanning 1270–1376 is the FAD-binding FR-type domain; the sequence is RKKVEISVVK…DGPFGEGHQE (107 aa). Residues 1270-1551 lie on the Cytoplasmic side of the membrane; it reads RKKVEISVVK…THFSHHYENF (282 aa).

This sequence in the N-terminal section; belongs to the peroxidase family. In terms of assembly, interacts with TXNDC11, TPO and CYBA. N-glycosylated. As to expression, expressed in thyrocytes and tracheal surface epithelial cells (at protein level). Expressed in thyroid, trachea, bronchium, and to a lower extent, in placenta, testis, prostate, pancreas and heart.

It localises to the apical cell membrane. It catalyses the reaction NADH + O2 + H(+) = H2O2 + NAD(+). The enzyme catalyses NADPH + O2 + H(+) = H2O2 + NADP(+). It participates in hormone biosynthesis; thyroid hormone biosynthesis. The NADPH oxidase activity is calcium-dependent. Peroxidase activity is inhibited by aminobenzohydrazide. In terms of biological role, generates hydrogen peroxide which is required for the activity of thyroid peroxidase/TPO and lactoperoxidase/LPO. Plays a role in thyroid hormones synthesis and lactoperoxidase-mediated antimicrobial defense at the surface of mucosa. May have its own peroxidase activity through its N-terminal peroxidase-like domain. The chain is Dual oxidase 1 (DUOX1) from Homo sapiens (Human).